A 204-amino-acid chain; its full sequence is Superoxide dismutase [Mn] (204 aa).

Mn(2+)-binding residues include His29, His84, Asp167, and His171.

Belongs to the iron/manganese superoxide dismutase family. Homotetramer. Requires Mn(2+) as cofactor.

It carries out the reaction 2 superoxide + 2 H(+) = H2O2 + O2. Functionally, destroys superoxide anion radicals which are normally produced within the cells and which are toxic to biological systems. This is Superoxide dismutase [Mn] (sodA) from Thermus thermophilus (strain ATCC BAA-163 / DSM 7039 / HB27).